Consider the following 362-residue polypeptide: MNIKSLLLGSAAALVAASGAQAADAIVAPEPEAVEYVRVCDAYGAGYFYIPGTEICLRVHGYVRYDVKGGDDVYSGTDRNGWDKGARFALRVSTGSETELGTLKTFTELRFNYAANNSGVDGKYGNETSSGTVMEFAYIQLGGLRVGIDESEFHTFTGYLGDVINDDVISAGSYRTGKISYTFTGGNGFSAVIALEQGGDNDGGYTGTTNYHIDGYMPDVVGGLKYAGGWGSIAGVVAYDSVIEEWAAKVRGDVNITDQFSVWLQGAYSSAATPDQNYGQWGGDWAVWGGLKYQATQKAAFNLQAAHDDWGKTAVTANVAYELVPGFTVTPEVSYTKFGGEWKNTVAEDNAWGGIVRFQRSF.

The signal sequence occupies residues methionine 1 to alanine 22.

This sequence belongs to the alphaproteobacteria porin family. In terms of assembly, homotrimer.

It is found in the cell outer membrane. Functionally, forms passive diffusion pores that allow small molecular weight hydrophilic materials across the outer membrane. This is Porin Omp2b (omp2b) from Brucella melitensis biotype 1 (strain ATCC 23456 / CCUG 17765 / NCTC 10094 / 16M).